A 542-amino-acid polypeptide reads, in one-letter code: Phosphoenolpyruvate carboxykinase (ATP) (542 aa).

Residues arginine 67, tyrosine 208, and lysine 214 each coordinate substrate. ATP contacts are provided by residues lysine 214, histidine 233, and 249-257; that span reads GLSGTGKTT. Residues lysine 214 and histidine 233 each contribute to the Mn(2+) site. Residue aspartate 270 participates in Mn(2+) binding. ATP is bound by residues glutamate 298, arginine 334, 450–451, and threonine 456; that span reads RI. Arginine 334 is a substrate binding site.

Belongs to the phosphoenolpyruvate carboxykinase (ATP) family. Monomer. Mn(2+) is required as a cofactor.

It is found in the cytoplasm. It carries out the reaction oxaloacetate + ATP = phosphoenolpyruvate + ADP + CO2. Its pathway is carbohydrate biosynthesis; gluconeogenesis. In terms of biological role, involved in the gluconeogenesis. Catalyzes the conversion of oxaloacetate (OAA) to phosphoenolpyruvate (PEP) through direct phosphoryl transfer between the nucleoside triphosphate and OAA. The sequence is that of Phosphoenolpyruvate carboxykinase (ATP) from Vibrio cholerae serotype O1 (strain ATCC 39541 / Classical Ogawa 395 / O395).